Here is a 135-residue protein sequence, read N- to C-terminus: HTH-type transcriptional repressor RghR (135 aa).

In terms of domain architecture, HTH cro/C1-type spans 8-63 (LRALREERKLTVNQLATYSGVSAAGISRIENGKRGVPKPATIKKLAEALKIPYEGL). The segment at residues 19-38 (VNQLATYSGVSAAGISRIEN) is a DNA-binding region (H-T-H motif).

Represses the expression of yvaM and both rapG and rapH. Binds directly to the promoter regions of yvaM, rapG and rapH. This chain is HTH-type transcriptional repressor RghR (rghR), found in Bacillus subtilis (strain 168).